The chain runs to 627 residues: Membrane protein insertase YidC (627 aa).

Residues 8–28 (LFLALILSMGIWMGVNYFFFP) form a helical membrane-spanning segment. The segment covering 33 to 57 (KKNTETKQTQSDKTSENTKQQITSG) has biased composition (polar residues). The disordered stretch occupies residues 33–68 (KKNTETKQTQSDKTSENTKQQITSGKTKESNSADPV). Residues 58-68 (KTKESNSADPV) are compositionally biased toward basic and acidic residues. The next 4 membrane-spanning stretches (helical) occupy residues 417 to 437 (FTIP…KLVF), 488 to 508 (VGGC…YTAF), 536 to 556 (AIPY…LMVG), and 575 to 595 (MLMY…PSGV).

This sequence belongs to the OXA1/ALB3/YidC family. Type 1 subfamily. As to quaternary structure, interacts with the Sec translocase complex via SecD. Specifically interacts with transmembrane segments of nascent integral membrane proteins during membrane integration.

Its subcellular location is the cell inner membrane. Its function is as follows. Required for the insertion and/or proper folding and/or complex formation of integral membrane proteins into the membrane. Involved in integration of membrane proteins that insert both dependently and independently of the Sec translocase complex, as well as at least some lipoproteins. Aids folding of multispanning membrane proteins. The sequence is that of Membrane protein insertase YidC from Leptospira interrogans serogroup Icterohaemorrhagiae serovar Lai (strain 56601).